The sequence spans 479 residues: Replication factor C large subunit (479 aa).

Residue 43–50 (GPPGVGKT) coordinates ATP. Positions 441–479 (EEKEESVEEVAEEKPEEEREEPRARKKAGKNLTLDSFFS) are disordered. The span at 452-463 (EEKPEEEREEPR) shows a compositional bias: basic and acidic residues.

The protein belongs to the activator 1 small subunits family. RfcL subfamily. In terms of assembly, heteropentamer composed of four small subunits (RfcS) and one large subunit (RfcL). Both subunits interact with PCNA.

Part of the RFC clamp loader complex which loads the PCNA sliding clamp onto DNA. The complex possesses DNA-dependent ATPase activity which is further stimulated by PCNA. This chain is Replication factor C large subunit (rfcL), found in Archaeoglobus fulgidus (strain ATCC 49558 / DSM 4304 / JCM 9628 / NBRC 100126 / VC-16).